A 109-amino-acid polypeptide reads, in one-letter code: Biphenyl dioxygenase system ferredoxin subunit (109 aa).

The Rieske domain occupies 4 to 100 (TRVCDRRDVP…IRIEDNDVLV (97 aa)). [2Fe-2S] cluster contacts are provided by Cys-43, His-45, Cys-63, and His-66.

The protein belongs to the bacterial ring-hydroxylating dioxygenase ferredoxin component family. As to quaternary structure, this dioxygenase system consists of four proteins: the two subunits of the hydroxylase component (BphA and BphE), a ferredoxin (BphF) and a ferredoxin reductase (BphG).

Its function is as follows. This protein seems to be a 2Fe-2S ferredoxin. This chain is Biphenyl dioxygenase system ferredoxin subunit (bphF), found in Paraburkholderia xenovorans (strain LB400).